The following is a 304-amino-acid chain: Recombination-associated protein RdgC (304 aa).

This sequence belongs to the RdgC family.

The protein localises to the cytoplasm. It is found in the nucleoid. May be involved in recombination. In Shewanella sp. (strain ANA-3), this protein is Recombination-associated protein RdgC.